The following is a 1112-amino-acid chain: MAEQEASGLQVLLHTLQSSSDKESILTILKVLGDLLSVGTDRRIHYMISKGGSEALLQTLVDTARTAPPDYDILLPLFRLLAKVGLRDKKIGRKALELEALDVTLILARKNLSHGQNLLHCLWALRVFASSVSMGAMLGINGAMELLFKVITPYTRKRTQAIRAATEVLAALLKSKSNGRRAVNRGYVTSLLGLHQDWHSHDTANAYVQIRRGLLLCLRHIAALRSGREAFLAAQGMEILFSTTQNCLDDKSMEPVISVVLQILRQCYPTSPLPLVTASSAYAFPVPGCITTEPPHDLPEEDFEDDGDDEVDKDSDTEDGKVEDDDLETDVNKLSSKPGLDRPEEELMQYEVMCLELSYSFEELQSKLGDDLNSEKTQYANHHHIPAAASSKQHCYSKDQSSCGQEREYAVQTSLLCRVKTGRSTVHLGSKKNPGVNLYQNVQSNSLRRDSSESEIPDIQASPKADAWDVDAIFCPRMSASFSNSTRTREVVKVIDKLLQTHLKRVPFHDPYLYMAKARRTSSVVDFKMMAFPDVWGHCPPPTTQPMLERKCGVQRIRIFEDIRRLIQPSDVINKVVFSLDEPWPLQDNASNCLRFFSKFESGNLRKAIQVREFEYDLLVNADVNSTQHQQWFYFKVSGMQAAIPYHFNIINCEKPNSQFNYGMQPTLYSVKEALLGKPTWIRTGHEICYYKNHYRQSTAVAGGASGKCYYTLTFAVTFPHSEDVCYLAYHYPYTYTALMTHLDILEKSVNLKEVYFRQDVLCQTLGGNPCPLVTITAMPESNSDEHLEQFRHRPYQVITARVHPGESNASWVMKGTLEFLVSSDPVARLLRENFIFKIIPMLNPDGVINGNHRCSLSGEDLNRQWLSPSAHLQPTIYHAKGLLYHLSSIGRSPVVFCDFHGHSQKKNVFLYGCSIKETLWQAACTVGTSTILEEVNYRTLPKILDKLAPAFTMSSCSFLVEKSRASTARVVVWREMGVSRSYTMESSYCGCNQGPYQCTQRLLERTKNERAHPVDGLQGLQFGTRELEEMGAMFCLGLLILELKSASCSHQLLAQAATLLSAEEDALDQHLQRLKSSNFLPKHIWFAYHFFAITNFFKMNLLLHVSPVCDT.

Positions 291-345 (TTEPPHDLPEEDFEDDGDDEVDKDSDTEDGKVEDDDLETDVNKLSSKPGLDRPEE) are disordered. The span at 299–329 (PEEDFEDDGDDEVDKDSDTEDGKVEDDDLET) shows a compositional bias: acidic residues. A Peptidase M14 domain is found at 732 to 1022 (YPYTYTALMT…HPVDGLQGLQ (291 aa)). His804, Glu807, and His901 together coordinate Zn(2+). The active-site Proton donor/acceptor is the Glu986.

It belongs to the peptidase M14 family. As to quaternary structure, interacts with MYLK. Interacts with TCF4. Requires Zn(2+) as cofactor. In terms of tissue distribution, expressed in corneal endothelium.

It localises to the cytoplasm. The protein localises to the cytosol. The catalysed reaction is (L-glutamyl)(n+1)-gamma-L-glutamyl-L-glutamyl-[protein] + H2O = (L-glutamyl)(n)-gamma-L-glutamyl-L-glutamyl-[protein] + L-glutamate. The enzyme catalyses C-terminal L-alpha-aminoacyl-L-glutamyl-L-glutamyl-[tubulin] + H2O = C-terminal L-alpha-aminoacyl-L-glutamyl-[tubulin] + L-glutamate. Functionally, metallocarboxypeptidase that mediates deglutamylation of tubulin and non-tubulin target proteins. Catalyzes the removal of polyglutamate side chains present on the gamma-carboxyl group of glutamate residues within the C-terminal tail of tubulin protein. Specifically cleaves tubulin long-side-chains, while it is not able to remove the branching point glutamate. Also catalyzes the removal of polyglutamate residues from the carboxy-terminus of non-tubulin proteins such as MYLK. This chain is Cytosolic carboxypeptidase 4, found in Homo sapiens (Human).